A 344-amino-acid polypeptide reads, in one-letter code: NADH-ubiquinone oxidoreductase chain 2 (344 aa).

The next 11 membrane-spanning stretches (helical) occupy residues 1-21 (MNPL…TITL), 24-44 (FHWL…IPLM), 59-79 (YFLT…ISAW), 94-114 (MNIL…HFWI), 121-141 (ISLP…MALL), 150-170 (LNLT…GGIG), 177-197 (IMAF…KFDP), 201-221 (LLNF…LTTI), 245-265 (LILL…KLLI), 273-293 (NATL…FFYI), and 324-344 (TAIM…LLLL).

It belongs to the complex I subunit 2 family.

The protein localises to the mitochondrion inner membrane. The catalysed reaction is a ubiquinone + NADH + 5 H(+)(in) = a ubiquinol + NAD(+) + 4 H(+)(out). Core subunit of the mitochondrial membrane respiratory chain NADH dehydrogenase (Complex I) that is believed to belong to the minimal assembly required for catalysis. Complex I functions in the transfer of electrons from NADH to the respiratory chain. The immediate electron acceptor for the enzyme is believed to be ubiquinone. This chain is NADH-ubiquinone oxidoreductase chain 2 (MT-ND2), found in Aquarana catesbeiana (American bullfrog).